A 399-amino-acid chain; its full sequence is Probable sugar efflux transporter (399 aa).

12 helical membrane passes run 15 to 35, 50 to 70, 81 to 101, 103 to 123, 136 to 156, 168 to 188, 209 to 229, 246 to 266, 273 to 293, 301 to 321, 333 to 353, and 364 to 384; these read VVTL…PVGL, VGMM…PFML, LIGL…AWSF, VLVI…SITS, AQAL…GIPI, MTFL…VKLL, PALV…YTAY, FATV…ILFG, ASGL…LLLP, LMLL…GMQV, VAMS…ALVG, and SIGY…LMIF.

The protein belongs to the major facilitator superfamily. SotB (TC 2.A.1.2) family.

The protein localises to the cell inner membrane. Involved in the efflux of sugars. The physiological role may be the reduction of the intracellular concentration of toxic sugars or sugar metabolites. The chain is Probable sugar efflux transporter from Klebsiella pneumoniae (strain 342).